We begin with the raw amino-acid sequence, 66 residues long: Defensin-like peptide 2/4 (66 aa).

An N-terminal signal peptide occupies residues Met1–Ala22. Positions Lys23 to Pro24 are excised as a propeptide. Met26 carries the D-methionine; in form DLP-2 modification. 3 cysteine pairs are disulfide-bonded: Cys33-Cys63, Cys40-Cys56, and Cys48-Cys64.

Post-translationally, stereoinversion of L-Met-26 (in DLP-4) to D-Met-26 (in DLP-2). In terms of tissue distribution, produced by the crural gland and detected in venom from the spur located on each male hind leg. Is also widely expressed in both male and female tissues, including brain, intestine, kidney, lung, spleen and testis.

The protein localises to the secreted. Functionally, does not show antimicrobial, myotoxic, hemolytic and cell-promoting activities. In Ornithorhynchus anatinus (Duckbill platypus), this protein is Defensin-like peptide 2/4.